A 273-amino-acid polypeptide reads, in one-letter code: 1,4-dihydroxy-2-naphthoyl-CoA synthase (273 aa).

Substrate contacts are provided by residues Arg-34, 73–77 (SGGDQ), Tyr-85, 117–121 (YAVGG), Thr-143, Ser-149, Tyr-246, and Lys-261. 142 to 144 (QTG) contacts hydrogencarbonate. Over residues 254-265 (GRDAFKEKRDPD) the composition is skewed to basic and acidic residues. The interval 254-273 (GRDAFKEKRDPDFDQFPKFP) is disordered.

Belongs to the enoyl-CoA hydratase/isomerase family. MenB subfamily. Requires hydrogencarbonate as cofactor.

It catalyses the reaction 2-succinylbenzoyl-CoA + H(+) = 1,4-dihydroxy-2-naphthoyl-CoA + H2O. The protein operates within quinol/quinone metabolism; 1,4-dihydroxy-2-naphthoate biosynthesis; 1,4-dihydroxy-2-naphthoate from chorismate: step 6/7. It participates in quinol/quinone metabolism; menaquinone biosynthesis. Its function is as follows. Converts o-succinylbenzoyl-CoA (OSB-CoA) to 1,4-dihydroxy-2-naphthoyl-CoA (DHNA-CoA). This Staphylococcus aureus (strain Mu50 / ATCC 700699) protein is 1,4-dihydroxy-2-naphthoyl-CoA synthase.